A 578-amino-acid chain; its full sequence is 2-succinyl-5-enolpyruvyl-6-hydroxy-3-cyclohexene-1-carboxylate synthase (578 aa).

It belongs to the TPP enzyme family. MenD subfamily. As to quaternary structure, homodimer. Requires Mg(2+) as cofactor. The cofactor is Mn(2+). Thiamine diphosphate is required as a cofactor.

It catalyses the reaction isochorismate + 2-oxoglutarate + H(+) = 5-enolpyruvoyl-6-hydroxy-2-succinyl-cyclohex-3-ene-1-carboxylate + CO2. It participates in quinol/quinone metabolism; 1,4-dihydroxy-2-naphthoate biosynthesis; 1,4-dihydroxy-2-naphthoate from chorismate: step 2/7. It functions in the pathway quinol/quinone metabolism; menaquinone biosynthesis. In terms of biological role, catalyzes the thiamine diphosphate-dependent decarboxylation of 2-oxoglutarate and the subsequent addition of the resulting succinic semialdehyde-thiamine pyrophosphate anion to isochorismate to yield 2-succinyl-5-enolpyruvyl-6-hydroxy-3-cyclohexene-1-carboxylate (SEPHCHC). In Bacillus velezensis (strain DSM 23117 / BGSC 10A6 / LMG 26770 / FZB42) (Bacillus amyloliquefaciens subsp. plantarum), this protein is 2-succinyl-5-enolpyruvyl-6-hydroxy-3-cyclohexene-1-carboxylate synthase.